Consider the following 932-residue polypeptide: Leucine--tRNA ligase (932 aa).

The 'HIGH' region signature appears at 38 to 48 (PYLNGNLHAGH). Positions 630-634 (KMSKS) match the 'KMSKS' region motif. Lys-633 provides a ligand contact to ATP.

This sequence belongs to the class-I aminoacyl-tRNA synthetase family.

Its subcellular location is the cytoplasm. The catalysed reaction is tRNA(Leu) + L-leucine + ATP = L-leucyl-tRNA(Leu) + AMP + diphosphate. The chain is Leucine--tRNA ligase from Archaeoglobus fulgidus (strain ATCC 49558 / DSM 4304 / JCM 9628 / NBRC 100126 / VC-16).